The chain runs to 122 residues: Small ribosomal subunit protein uS13 (122 aa).

Positions 99-122 (RGQRTHTNARTRKGPAKAIAGKKK) are disordered.

The protein belongs to the universal ribosomal protein uS13 family. In terms of assembly, part of the 30S ribosomal subunit. Forms a loose heterodimer with protein S19. Forms two bridges to the 50S subunit in the 70S ribosome.

Functionally, located at the top of the head of the 30S subunit, it contacts several helices of the 16S rRNA. In the 70S ribosome it contacts the 23S rRNA (bridge B1a) and protein L5 of the 50S subunit (bridge B1b), connecting the 2 subunits; these bridges are implicated in subunit movement. Contacts the tRNAs in the A and P-sites. In Rhodopseudomonas palustris (strain BisA53), this protein is Small ribosomal subunit protein uS13.